The following is a 124-amino-acid chain: Small ribosomal subunit protein uS12 (124 aa).

Aspartate 89 carries the post-translational modification 3-methylthioaspartic acid.

The protein belongs to the universal ribosomal protein uS12 family. As to quaternary structure, part of the 30S ribosomal subunit. Contacts proteins S8 and S17. May interact with IF1 in the 30S initiation complex.

In terms of biological role, with S4 and S5 plays an important role in translational accuracy. Interacts with and stabilizes bases of the 16S rRNA that are involved in tRNA selection in the A site and with the mRNA backbone. Located at the interface of the 30S and 50S subunits, it traverses the body of the 30S subunit contacting proteins on the other side and probably holding the rRNA structure together. The combined cluster of proteins S8, S12 and S17 appears to hold together the shoulder and platform of the 30S subunit. In Edwardsiella ictaluri (strain 93-146), this protein is Small ribosomal subunit protein uS12.